Here is a 219-residue protein sequence, read N- to C-terminus: Elongation factor Ts (219 aa).

An involved in Mg(2+) ion dislocation from EF-Tu region spans residues 82–85 (TDFV).

It belongs to the EF-Ts family.

The protein resides in the cytoplasm. Its function is as follows. Associates with the EF-Tu.GDP complex and induces the exchange of GDP to GTP. It remains bound to the aminoacyl-tRNA.EF-Tu.GTP complex up to the GTP hydrolysis stage on the ribosome. This Anaeromyxobacter sp. (strain K) protein is Elongation factor Ts.